A 161-amino-acid polypeptide reads, in one-letter code: Large ribosomal subunit protein uL10 (161 aa).

Belongs to the universal ribosomal protein uL10 family. Part of the ribosomal stalk of the 50S ribosomal subunit. The N-terminus interacts with L11 and the large rRNA to form the base of the stalk. The C-terminus forms an elongated spine to which L12 dimers bind in a sequential fashion forming a multimeric L10(L12)X complex.

In terms of biological role, forms part of the ribosomal stalk, playing a central role in the interaction of the ribosome with GTP-bound translation factors. This Campylobacter fetus subsp. fetus (strain 82-40) protein is Large ribosomal subunit protein uL10.